The chain runs to 375 residues: tRNA-specific 2-thiouridylase MnmA (375 aa).

Residues 17 to 24 and Met-43 contribute to the ATP site; that span reads GMSGGVDS. Residues 103 to 105 form an interaction with target base in tRNA region; the sequence is NPD. Residue Cys-108 is the Nucleophile of the active site. Cys-108 and Cys-204 are oxidised to a cystine. ATP is bound at residue Gly-132. The interaction with tRNA stretch occupies residues 154 to 156; sequence KDQ. Cys-204 (cysteine persulfide intermediate) is an active-site residue. The interaction with tRNA stretch occupies residues 316 to 317; that stretch reads RY.

It belongs to the MnmA/TRMU family.

The protein localises to the cytoplasm. It carries out the reaction S-sulfanyl-L-cysteinyl-[protein] + uridine(34) in tRNA + AH2 + ATP = 2-thiouridine(34) in tRNA + L-cysteinyl-[protein] + A + AMP + diphosphate + H(+). Its function is as follows. Catalyzes the 2-thiolation of uridine at the wobble position (U34) of tRNA, leading to the formation of s(2)U34. The protein is tRNA-specific 2-thiouridylase MnmA of Stutzerimonas stutzeri (strain A1501) (Pseudomonas stutzeri).